We begin with the raw amino-acid sequence, 341 residues long: Serine/threonine-protein kinase-like protein At5g23170 (341 aa).

The Protein kinase domain occupies 16–298 (FSPSKLIGKG…FGEITAEIVA (283 aa)). Residues 22–30 (IGKGSHGYV) and lysine 51 each bind ATP. The tract at residues 52–75 (TPSSLSPSSPSSSSSSKSEQTKKL) is disordered. Low complexity predominate over residues 53–69 (PSSLSPSSPSSSSSSKS). Residue aspartate 153 is the Proton acceptor of the active site. The stretch at 311 to 332 (MSVLRRVVKLKRRKKRLRETLT) forms a coiled coil.

This sequence belongs to the protein kinase superfamily. Ser/Thr protein kinase family. In terms of tissue distribution, ubiquitous. Higher expression in mature stamina and pollen.

The enzyme catalyses L-seryl-[protein] + ATP = O-phospho-L-seryl-[protein] + ADP + H(+). It catalyses the reaction L-threonyl-[protein] + ATP = O-phospho-L-threonyl-[protein] + ADP + H(+). The sequence is that of Serine/threonine-protein kinase-like protein At5g23170 from Arabidopsis thaliana (Mouse-ear cress).